The chain runs to 560 residues: Kinesin light chain 1 (560 aa).

Residues 31 to 99 adopt a coiled-coil conformation; that stretch reads VIQGLEALKN…MALSNHLNAV (69 aa). Residues 155–176 show a composition bias toward basic and acidic residues; sequence KKYDDDISPSEDKDTDSTKEPL. Residues 155–203 form a disordered region; it reads KKYDDDISPSEDKDTDSTKEPLDDLFPNDEDDPGQGIQQQHSSAAAAAQ. Ser-162 carries the phosphoserine modification. The span at 192–203 shows a compositional bias: low complexity; sequence QQQHSSAAAAAQ. TPR repeat units lie at residues 213-246, 255-288, 297-330, 339-372, and 381-414; these read LRTL…LEKT, ATML…REKT, AATL…REKV, AKQL…YQTK, and AKTK…AHER. Tyr-449 carries the post-translational modification Phosphotyrosine. Ser-460 carries the phosphoserine modification. The stretch at 464 to 497 is one TPR 6 repeat; that stretch reads TTTLKNLGALYRRQGKFEAAETLEEAAMRSRKQG. Phosphoserine; by AMPK is present on residues Ser-521 and Ser-524.

The protein belongs to the kinesin light chain family. Oligomeric complex composed of two heavy chains and two light chains. Interacts with SPAG9. Interacts with ATCAY; may link mitochondria to KLC1 and regulate mitochondria localization into neuron projections. Interacts (via TPR repeats) with TOR1A; the interaction associates TOR1A with the kinesin oligomeric complex. Interacts with BORCS5. Interacts with MAPK8IP3/JIP3 and NTRK2/TRKB; interaction with NTRK2/TRKB is mediated by MAPK8IP3/JIP3. Interacts with CLSTN1; phosphorylation at Ser-460 inhibits interaction with CLSTN1. Post-translationally, phosphorylation at Ser-460 by ERK inhibits interaction with CLSTN1 and localization to cytoplasmic vesicles.

It is found in the cell projection. The protein localises to the growth cone. The protein resides in the cytoplasmic vesicle. Its subcellular location is the cytoplasm. It localises to the cytoskeleton. Functionally, kinesin is a microtubule-associated force-producing protein that may play a role in organelle transport. The light chain may function in coupling of cargo to the heavy chain or in the modulation of its ATPase activity. The sequence is that of Kinesin light chain 1 (KLC1) from Pongo abelii (Sumatran orangutan).